The sequence spans 93 residues: Putative regulatory protein Cthe_1316 (93 aa).

A disordered region spans residues 74–93; the sequence is RLNTKEAEDVEVDDEEEIDE. The segment covering 81–93 has biased composition (acidic residues); sequence EDVEVDDEEEIDE.

It belongs to the RemA family.

This chain is Putative regulatory protein Cthe_1316, found in Acetivibrio thermocellus (strain ATCC 27405 / DSM 1237 / JCM 9322 / NBRC 103400 / NCIMB 10682 / NRRL B-4536 / VPI 7372) (Clostridium thermocellum).